Reading from the N-terminus, the 194-residue chain is Holliday junction branch migration complex subunit RuvA (194 aa).

Positions 1–64 (MISRLTGKLV…EDAHLLFGFA (64 aa)) are domain I. The tract at residues 65-143 (TAEERKTFRQ…AHTVTDGLFA (79 aa)) is domain II. Residues 144 to 147 (AAPA) form a flexible linker region. Residues 147-194 (AADETEDIVSTLLALGYSEREAKAAVKGVPEGTDVGEGVRLALKNLLK) form a domain III region.

This sequence belongs to the RuvA family. Homotetramer. Forms an RuvA(8)-RuvB(12)-Holliday junction (HJ) complex. HJ DNA is sandwiched between 2 RuvA tetramers; dsDNA enters through RuvA and exits via RuvB. An RuvB hexamer assembles on each DNA strand where it exits the tetramer. Each RuvB hexamer is contacted by two RuvA subunits (via domain III) on 2 adjacent RuvB subunits; this complex drives branch migration. In the full resolvosome a probable DNA-RuvA(4)-RuvB(12)-RuvC(2) complex forms which resolves the HJ.

It localises to the cytoplasm. Its function is as follows. The RuvA-RuvB-RuvC complex processes Holliday junction (HJ) DNA during genetic recombination and DNA repair, while the RuvA-RuvB complex plays an important role in the rescue of blocked DNA replication forks via replication fork reversal (RFR). RuvA specifically binds to HJ cruciform DNA, conferring on it an open structure. The RuvB hexamer acts as an ATP-dependent pump, pulling dsDNA into and through the RuvAB complex. HJ branch migration allows RuvC to scan DNA until it finds its consensus sequence, where it cleaves and resolves the cruciform DNA. This Neisseria meningitidis serogroup C (strain 053442) protein is Holliday junction branch migration complex subunit RuvA.